The following is a 660-amino-acid chain: DNA ligase (660 aa).

NAD(+)-binding positions include 33-37 (DFVYD), 82-83 (SL), and Glu110. Lys112 functions as the N6-AMP-lysine intermediate in the catalytic mechanism. NAD(+)-binding residues include Arg133, Glu167, Lys281, and Lys305. Zn(2+)-binding residues include Cys396, Cys399, Cys412, and Cys417. The 78-residue stretch at 583 to 660 (DENKLLVGKK…SFEDIKSYLD (78 aa)) folds into the BRCT domain.

This sequence belongs to the NAD-dependent DNA ligase family. LigA subfamily. Mg(2+) serves as cofactor. Requires Mn(2+) as cofactor.

The enzyme catalyses NAD(+) + (deoxyribonucleotide)n-3'-hydroxyl + 5'-phospho-(deoxyribonucleotide)m = (deoxyribonucleotide)n+m + AMP + beta-nicotinamide D-nucleotide.. In terms of biological role, DNA ligase that catalyzes the formation of phosphodiester linkages between 5'-phosphoryl and 3'-hydroxyl groups in double-stranded DNA using NAD as a coenzyme and as the energy source for the reaction. It is essential for DNA replication and repair of damaged DNA. In Borreliella afzelii (strain PKo) (Borrelia afzelii), this protein is DNA ligase.